A 418-amino-acid polypeptide reads, in one-letter code: Serine/threonine transporter SstT (418 aa).

The next 8 helical transmembrane spans lie at 21 to 41, 49 to 69, 83 to 103, 142 to 162, 190 to 210, 217 to 237, 299 to 319, and 331 to 351; these read ILIG…AAIA, FVGA…IASI, ILFL…VVSF, ALLN…GIAL, FAPL…GFGA, LLVV…PLIV, MAGA…TLGI, and VVAA…LLLI.

The protein belongs to the dicarboxylate/amino acid:cation symporter (DAACS) (TC 2.A.23) family.

The protein resides in the cell inner membrane. The enzyme catalyses L-serine(in) + Na(+)(in) = L-serine(out) + Na(+)(out). It carries out the reaction L-threonine(in) + Na(+)(in) = L-threonine(out) + Na(+)(out). Functionally, involved in the import of serine and threonine into the cell, with the concomitant import of sodium (symport system). This chain is Serine/threonine transporter SstT, found in Yersinia pseudotuberculosis serotype O:1b (strain IP 31758).